Here is a 297-residue protein sequence, read N- to C-terminus: Guanylate kinase (297 aa).

The region spanning 4–183 (GKMIIISGPS…AVAKITDVLH (180 aa)) is the Guanylate kinase-like domain. 11 to 18 (GPSGVGKG) contributes to the ATP binding site. Residues 204–297 (EQIVKEKYMY…EQKHYNNDEF (94 aa)) are unknown.

This sequence belongs to the guanylate kinase family.

Its subcellular location is the cytoplasm. The catalysed reaction is GMP + ATP = GDP + ADP. Essential for recycling GMP and indirectly, cGMP. This Mycoplasma capricolum subsp. capricolum (strain California kid / ATCC 27343 / NCTC 10154) protein is Guanylate kinase (gmk).